Consider the following 105-residue polypeptide: Fe-S protein maturation auxiliary factor PG_1777 (105 aa).

This sequence belongs to the Fe-S cluster assembly domain superfamily. MIP18-like family. Putative homodimer; may be disulfide-linked.

Its function is as follows. Iron binding protein that protects DNA from Fenton chemistry-mediated damage caused by hydrogen peroxide induced oxidative stress. May be involved in iron-sulfur cluster assembly. The sequence is that of Fe-S protein maturation auxiliary factor PG_1777 from Porphyromonas gingivalis (strain ATCC BAA-308 / W83).